Consider the following 752-residue polypeptide: ATP-dependent RNA helicase DRS1 (752 aa).

2 disordered regions span residues 1 to 61 (MVVG…NLDE) and 119 to 223 (GLVK…TEGD). Residues 19 to 34 (DSEDDVPILDSSDDEK) are compositionally biased toward acidic residues. The segment covering 40–51 (TTKKRKGKNNKK) has biased composition (basic residues). Positions 124-142 (AHIDSKQEEETEKEKVEKE) are enriched in basic and acidic residues. Acidic residues-rich tracts occupy residues 167-191 (NQSEEEEEEEEKEEEEEEEEEQEEM) and 200-209 (DEIDEEDDSE). Position 208 is a phosphoserine (Ser-208). Residues 231-259 (ENFNSLSLSRPVLKGLASLGYVKPSPIQS) carry the Q motif motif. The region spanning 262–437 (IPIALLGKDI…SLSLKKPVRI (176 aa)) is the Helicase ATP-binding domain. 275-282 (AVTGSGKT) lines the ATP pocket. Positions 385–388 (DEAD) match the DEAD box motif. In terms of domain architecture, Helicase C-terminal spans 448 to 639 (KLTQEFVRIR…SMNDTIEDIL (192 aa)). Residues 621–667 (IEETNKLVESMNDTIEDILVEEKEEKEILRAEMQLRKGENMLKHKKE) adopt a coiled-coil conformation. Positions 673–752 (RRTWFQSESD…NKKKGFKSRR (80 aa)) are disordered. Residues 694–705 (RNKKVTNSKKRK) are compositionally biased toward basic residues. Residues 722–734 (TKTDRIADQERTF) show a composition bias toward basic and acidic residues. Residues 735-752 (KKQKSTNSNKKKGFKSRR) show a composition bias toward basic residues.

The protein belongs to the DEAD box helicase family. DDX27/DRS1 subfamily. As to quaternary structure, interacts with RRP1 and associates with pre-ribosomal particles.

It localises to the nucleus. The protein resides in the nucleolus. It catalyses the reaction ATP + H2O = ADP + phosphate + H(+). Its function is as follows. ATP-binding RNA helicase involved in ribosome assembly. The chain is ATP-dependent RNA helicase DRS1 (DRS1) from Saccharomyces cerevisiae (strain ATCC 204508 / S288c) (Baker's yeast).